A 246-amino-acid polypeptide reads, in one-letter code: Large ribosomal subunit protein uL3 (246 aa).

2 disordered regions span residues 140 to 162 (SHRS…NKKM) and 214 to 246 (ADVP…EENA). Gln-151 carries the N5-methylglutamine modification. Residues 234–246 (EAAPEAPASEENA) are compositionally biased toward low complexity.

Belongs to the universal ribosomal protein uL3 family. In terms of assembly, part of the 50S ribosomal subunit. Forms a cluster with proteins L14 and L19. Post-translationally, methylated by PrmB.

In terms of biological role, one of the primary rRNA binding proteins, it binds directly near the 3'-end of the 23S rRNA, where it nucleates assembly of the 50S subunit. In Methylorubrum extorquens (strain CM4 / NCIMB 13688) (Methylobacterium extorquens), this protein is Large ribosomal subunit protein uL3.